The primary structure comprises 302 residues: Taste receptor type 2 member 104 (302 aa).

Over 1–7 the chain is Extracellular; that stretch reads MLSMLES. A helical transmembrane segment spans residues 8–28; sequence ILLSVATSEAMLGILGNIFIV. The Cytoplasmic portion of the chain corresponds to 29-43; the sequence is LVNCTNWVRNKKLSK. The chain crosses the membrane as a helical span at residues 44–64; that stretch reads INFILTGLAISRVFTIWIITL. The Extracellular segment spans residues 65–87; sequence DAYTKVFFLTTLMPSNLHECISY. The chain crosses the membrane as a helical span at residues 88–108; the sequence is IWVIINHLSVWFATSLSIFYF. The Cytoplasmic portion of the chain corresponds to 109 to 128; it reads LKIANFSHYIFLWLKRRADK. A helical membrane pass occupies residues 129–149; the sequence is VFVFLIGYLIITWLASFPLAV. Residues 150-182 lie on the Extracellular side of the membrane; the sequence is TVIKNIKVHHNNTSWLIQLEKRELLINYVFANM. N-linked (GlcNAc...) asparagine glycosylation is found at Asn160 and Asn161. A helical membrane pass occupies residues 183 to 203; that stretch reads GPISLFMVAVFTCFLLTISLW. The Cytoplasmic portion of the chain corresponds to 204 to 233; that stretch reads RHRRRMQSTGSKFRDLNTEVHVKAMKVLIS. A helical transmembrane segment spans residues 234-254; that stretch reads FIILFILYFMGVLIETLCLFL. Residues 255-257 are Extracellular-facing; it reads TEN. A helical transmembrane segment spans residues 258 to 278; it reads ILLFIFGFTLSSTYPCCHSFI. At 279–302 the chain is on the cytoplasmic side; the sequence is LILTSRELKQASMRALQRLKCCET.

The protein belongs to the G-protein coupled receptor T2R family.

It is found in the membrane. Its function is as follows. Putative taste receptor which may play a role in the perception of bitterness. The polypeptide is Taste receptor type 2 member 104 (Rattus norvegicus (Rat)).